Reading from the N-terminus, the 82-residue chain is Omega-ctenitoxin-Pn1a (82 aa).

Positions 1–21 are cleaved as a signal peptide; it reads MWLKIQVFLLAITLITLGIQA. A propeptide spanning residues 22–37 is cleaved from the precursor; that stretch reads EPNSSPNNPLIEEEAR. 4 disulfides stabilise this stretch: Cys-39/Cys-54, Cys-46/Cys-59, Cys-53/Cys-70, and Cys-61/Cys-68. The propeptide occupies 72-82; that stretch reads KKFIEFFGGGK.

This sequence belongs to the neurotoxin 02 (plectoxin) family. As to expression, expressed by the venom gland.

It localises to the secreted. Functionally, antagonist of L-type calcium channels (Cav1/CACNA1). Induces immediate clockwise gyration and flaccid paralysis after 6 hours at dose levels of 5 ug per mouse. This chain is Omega-ctenitoxin-Pn1a, found in Phoneutria nigriventer (Brazilian armed spider).